A 299-amino-acid chain; its full sequence is Tyrosine recombinase XerC (299 aa).

The Core-binding (CB) domain maps to 1–85 (MERQLDAYCE…AVRGLYHYLN (85 aa)). Residues 106 to 285 (RLPKTLDTDR…DFQHLATVYD (180 aa)) enclose the Tyr recombinase domain. Residues Arg-146, Lys-170, His-237, Arg-240, and His-263 contribute to the active site. The active-site O-(3'-phospho-DNA)-tyrosine intermediate is the Tyr-272.

The protein belongs to the 'phage' integrase family. XerC subfamily. Forms a cyclic heterotetrameric complex composed of two molecules of XerC and two molecules of XerD.

It is found in the cytoplasm. Functionally, site-specific tyrosine recombinase, which acts by catalyzing the cutting and rejoining of the recombining DNA molecules. The XerC-XerD complex is essential to convert dimers of the bacterial chromosome into monomers to permit their segregation at cell division. It also contributes to the segregational stability of plasmids. The protein is Tyrosine recombinase XerC of Pseudomonas fluorescens.